The following is a 513-amino-acid chain: ATP synthase subunit alpha 1 (513 aa).

169 to 176 (GDRQTGKT) contacts ATP.

The protein belongs to the ATPase alpha/beta chains family. As to quaternary structure, F-type ATPases have 2 components, CF(1) - the catalytic core - and CF(0) - the membrane proton channel. CF(1) has five subunits: alpha(3), beta(3), gamma(1), delta(1), epsilon(1). CF(0) has three main subunits: a(1), b(2) and c(9-12). The alpha and beta chains form an alternating ring which encloses part of the gamma chain. CF(1) is attached to CF(0) by a central stalk formed by the gamma and epsilon chains, while a peripheral stalk is formed by the delta and b chains.

It is found in the cell inner membrane. It carries out the reaction ATP + H2O + 4 H(+)(in) = ADP + phosphate + 5 H(+)(out). In terms of biological role, produces ATP from ADP in the presence of a proton gradient across the membrane. The alpha chain is a regulatory subunit. The chain is ATP synthase subunit alpha 1 from Nitrosomonas eutropha (strain DSM 101675 / C91 / Nm57).